The chain runs to 270 residues: 2-heptyl-3-hydroxy-4-quinolone dioxygenase AqdC2 (270 aa).

One can recognise an AB hydrolase-1 domain in the interval 25-156 (PALVLLTGWG…KSARAGLAKS (132 aa)). A substrate-binding site is contributed by His99. His248 (proton donor/acceptor) is an active-site residue.

The protein belongs to the AB hydrolase superfamily.

It catalyses the reaction 2-heptyl-3-hydroxy-4(1H)-quinolone + O2 = N-octanoylanthranilate + CO + H(+). Its function is as follows. Involved in the degradation of the Pseudomonas aeruginosa quorum sensing signal molecules HHQ (2-heptyl-4-quinolone) and PQS (2-heptyl-3-hydroxy-4-quinolone) to anthranilic acid. Catalyzes the cleavage of PQS to form N-octanoylanthranilic acid and carbon monoxide. This chain is 2-heptyl-3-hydroxy-4-quinolone dioxygenase AqdC2, found in Rhodococcus erythropolis (Arthrobacter picolinophilus).